Reading from the N-terminus, the 348-residue chain is Dihydroorotase (348 aa).

Zn(2+) contacts are provided by histidine 14 and histidine 16. Residues 16–18 (HLR) and asparagine 42 contribute to the substrate site. Positions 100, 137, and 175 each coordinate Zn(2+). Lysine 100 carries the N6-carboxylysine modification. Histidine 137 serves as a coordination point for substrate. Leucine 220 contributes to the substrate binding site. Residue aspartate 248 participates in Zn(2+) binding. Aspartate 248 is a catalytic residue. The substrate site is built by histidine 252 and alanine 264.

Belongs to the metallo-dependent hydrolases superfamily. DHOase family. Class II DHOase subfamily. In terms of assembly, homodimer. Zn(2+) is required as a cofactor.

The catalysed reaction is (S)-dihydroorotate + H2O = N-carbamoyl-L-aspartate + H(+). Its pathway is pyrimidine metabolism; UMP biosynthesis via de novo pathway; (S)-dihydroorotate from bicarbonate: step 3/3. Functionally, catalyzes the reversible cyclization of carbamoyl aspartate to dihydroorotate. The polypeptide is Dihydroorotase (Pseudomonas fluorescens (strain Pf0-1)).